Here is a 392-residue protein sequence, read N- to C-terminus: MTPEEQLRIIKEGTVEIIEEEELLKKLKEGRPLRVKAGFDPTAPDLHLGHVVLLQKLRQFQQLGHEVFFIIGDFTAMIGDPTGRSQTRPPLSREQVLENAKTYEHQVFKVLIPEKTTVVFNSTWLEELGTKGLIELCAKYTVARMLEREDFSKRFKEGIPIYIHEFIYPLLQAYDSVAIKADVEIGGTDQKFNLLIGRDIQREYGQEPQVCITLPLLVGTDGVRKMSKSYGNYVGITEDPKTMFAKIMSIPDEIMWDWFLLLTDYNKEEIEKMRREMHPMEAKKLLAFTIVKRFHSEEEARKAKEWWEKTFSQREFPEDAPLVKLNEKKLRAVDFLVKIGAVKSKNEARRVIQGGGLKINGEKVTDPNTEIEINGELKVKVGKKKFYRVVSG.

The short motif at 41–50 (PTAPDLHLGH) is the 'HIGH' region element. Residues 225–229 (KMSKS) carry the 'KMSKS' region motif. Residue K228 participates in ATP binding. The S4 RNA-binding domain occupies 330-390 (LRAVDFLVKI…VGKKKFYRVV (61 aa)).

Belongs to the class-I aminoacyl-tRNA synthetase family. TyrS type 2 subfamily. In terms of assembly, homodimer.

It is found in the cytoplasm. The catalysed reaction is tRNA(Tyr) + L-tyrosine + ATP = L-tyrosyl-tRNA(Tyr) + AMP + diphosphate + H(+). Its function is as follows. Catalyzes the attachment of tyrosine to tRNA(Tyr) in a two-step reaction: tyrosine is first activated by ATP to form Tyr-AMP and then transferred to the acceptor end of tRNA(Tyr). The sequence is that of Tyrosine--tRNA ligase from Aquifex aeolicus (strain VF5).